The primary structure comprises 250 residues: Ribosomal RNA small subunit methyltransferase J (250 aa).

Residues 96 to 97 and aspartate 168 each bind S-adenosyl-L-methionine; that span reads RD.

This sequence belongs to the methyltransferase superfamily. RsmJ family.

It localises to the cytoplasm. It carries out the reaction guanosine(1516) in 16S rRNA + S-adenosyl-L-methionine = N(2)-methylguanosine(1516) in 16S rRNA + S-adenosyl-L-homocysteine + H(+). Specifically methylates the guanosine in position 1516 of 16S rRNA. This Neisseria gonorrhoeae (strain ATCC 700825 / FA 1090) protein is Ribosomal RNA small subunit methyltransferase J.